Here is a 229-residue protein sequence, read N- to C-terminus: Synaptogyrin-3 (229 aa).

The residue at position 1 (methionine 1) is an N-acetylmethionine. The MARVEL domain occupies 20 to 172 (FARRPQTLLR…LTVKALQRFR (153 aa)). A run of 4 helical transmembrane segments spans residues 30 to 50 (VASW…GYVN), 70 to 90 (FGVA…LLDV), 105 to 125 (VLLD…GFCF), and 148 to 168 (AAIA…VKAL). Residues 209–219 (QSPPFTETLDT) show a composition bias toward polar residues. Residues 209 to 229 (QSPPFTETLDTSPKGYQVPAY) are disordered.

It belongs to the synaptogyrin family. As to quaternary structure, interacts (via N-terminus) with SLC6A3 (via N-terminus). May interact with VMAT2. In terms of tissue distribution, expressed in brain and placenta.

It localises to the cytoplasmic vesicle. The protein localises to the secretory vesicle. The protein resides in the synaptic vesicle membrane. Its subcellular location is the synapse. Functionally, may play a role in regulated exocytosis. May indirectly regulate the activity of the plasma membrane dopamine transporter SLC6A3 and thereby regulate dopamine transport back from the synaptic cleft into the presynaptic terminal. In Homo sapiens (Human), this protein is Synaptogyrin-3.